The primary structure comprises 406 residues: MTITPKNKRTSSIPKSQTATIGGEEVLKKLKGVEGDHSIAVGLSGGVDSSLTAALLVEAGWNVEGITLWLMSGKGSCCTDGLVDAAGICEQLGIPHHVIDARETFQREIIESLVKGYQEGMTPSPCSKCNRFVKFSPILEWAEQNLGLKRIATGHYARIKHLQEPIKISSAKENQIRRHQLLRGLDQNKDQSYFLYDLSQEILEKVIFPLGELKKADTRKEASRIELRTAEKPESQDLCLAEHHGSMKAFLDEYISPRNGEILLSNGQLLGQHDGIEHFTIGQRKGLGIAWKEPLHVIEIQSSTNRVIVAPRSEASRDNCTVGSINWVSIEPPSKKTIVEVQLRYRSKPVLATLTPIKPLKKDIENDRPYRCNLQFQSEQFSITPGQAAVFYEGEILLGGGIIEGN.

Residues 42-49 and Leu68 contribute to the ATP site; that span reads GLSGGVDS. Cys129 serves as the catalytic Nucleophile. The cysteines at positions 129 and 239 are disulfide-linked. Residue Gly154 coordinates ATP. The interval 189–191 is interaction with tRNA; that stretch reads KDQ. The Cysteine persulfide intermediate role is filled by Cys239. The interaction with tRNA stretch occupies residues 344–345; it reads RY.

This sequence belongs to the MnmA/TRMU family.

Its subcellular location is the cytoplasm. The catalysed reaction is S-sulfanyl-L-cysteinyl-[protein] + uridine(34) in tRNA + AH2 + ATP = 2-thiouridine(34) in tRNA + L-cysteinyl-[protein] + A + AMP + diphosphate + H(+). Functionally, catalyzes the 2-thiolation of uridine at the wobble position (U34) of tRNA, leading to the formation of s(2)U34. The chain is tRNA-specific 2-thiouridylase MnmA from Prochlorococcus marinus (strain SARG / CCMP1375 / SS120).